Reading from the N-terminus, the 344-residue chain is UDP-3-O-acylglucosamine N-acyltransferase (344 aa).

The active-site Proton acceptor is H236.

Belongs to the transferase hexapeptide repeat family. LpxD subfamily. As to quaternary structure, homotrimer.

It carries out the reaction a UDP-3-O-[(3R)-3-hydroxyacyl]-alpha-D-glucosamine + a (3R)-hydroxyacyl-[ACP] = a UDP-2-N,3-O-bis[(3R)-3-hydroxyacyl]-alpha-D-glucosamine + holo-[ACP] + H(+). Its pathway is bacterial outer membrane biogenesis; LPS lipid A biosynthesis. Catalyzes the N-acylation of UDP-3-O-acylglucosamine using 3-hydroxyacyl-ACP as the acyl donor. Is involved in the biosynthesis of lipid A, a phosphorylated glycolipid that anchors the lipopolysaccharide to the outer membrane of the cell. In Nitratidesulfovibrio vulgaris (strain ATCC 29579 / DSM 644 / CCUG 34227 / NCIMB 8303 / VKM B-1760 / Hildenborough) (Desulfovibrio vulgaris), this protein is UDP-3-O-acylglucosamine N-acyltransferase.